A 127-amino-acid polypeptide reads, in one-letter code: Large ribosomal subunit protein bL19 (127 aa).

It belongs to the bacterial ribosomal protein bL19 family.

Its function is as follows. This protein is located at the 30S-50S ribosomal subunit interface and may play a role in the structure and function of the aminoacyl-tRNA binding site. This Paraburkholderia phymatum (strain DSM 17167 / CIP 108236 / LMG 21445 / STM815) (Burkholderia phymatum) protein is Large ribosomal subunit protein bL19.